Consider the following 542-residue polypeptide: Chaperonin GroEL (542 aa).

ATP-binding positions include 29 to 32, 86 to 90, G413, 476 to 478, and D492; these read TLGP, DGTTT, and NAA.

Belongs to the chaperonin (HSP60) family. As to quaternary structure, forms a cylinder of 14 subunits composed of two heptameric rings stacked back-to-back. Interacts with the co-chaperonin GroES.

The protein localises to the cytoplasm. The catalysed reaction is ATP + H2O + a folded polypeptide = ADP + phosphate + an unfolded polypeptide.. Together with its co-chaperonin GroES, plays an essential role in assisting protein folding. The GroEL-GroES system forms a nano-cage that allows encapsulation of the non-native substrate proteins and provides a physical environment optimized to promote and accelerate protein folding. The chain is Chaperonin GroEL from Lactococcus lactis subsp. lactis (strain IL1403) (Streptococcus lactis).